The following is a 272-amino-acid chain: HMP-PP phosphatase (272 aa).

D8 (nucleophile) is an active-site residue. The Mg(2+) site is built by D8, D10, and D212.

The protein belongs to the HAD-like hydrolase superfamily. Cof family. Mg(2+) serves as cofactor.

The catalysed reaction is 4-amino-2-methyl-5-(diphosphooxymethyl)pyrimidine + H2O = 4-amino-2-methyl-5-(phosphooxymethyl)pyrimidine + phosphate + H(+). Its function is as follows. Catalyzes the hydrolysis of 4-amino-2-methyl-5-hydroxymethylpyrimidine pyrophosphate (HMP-PP) to 4-amino-2-methyl-5-hydroxymethylpyrimidine phosphate (HMP-P). This chain is HMP-PP phosphatase, found in Escherichia coli O6:H1 (strain CFT073 / ATCC 700928 / UPEC).